We begin with the raw amino-acid sequence, 175 residues long: Disulfide bond formation protein B (175 aa).

Residues 1–13 (MTAFTRFAHSRAS) lie on the Cytoplasmic side of the membrane. A helical membrane pass occupies residues 14–30 (WFILTGSAIALEAAALY). Residues 31 to 48 (FQYVMKLDPCVMCIYQRL) are Periplasmic-facing. Cysteine 40 and cysteine 43 are joined by a disulfide. A helical transmembrane segment spans residues 49 to 64 (AVFGILASGLIGMTAP). Residues 65-71 (KFLIVRI) are Cytoplasmic-facing. Residues 72–89 (LGAIGWAVSATWGLKLAL) traverse the membrane as a helical segment. Residues 90–144 (ALVDMQNNPSPFSTCSFLPEFPAWMPLHEWFPSVMLPTGMCTDVPWQFMGVTMAE) are Periplasmic-facing. A disulfide bond links cysteine 104 and cysteine 130. Residues 145–163 (WMVVAFSGYLVALLLFIVP) form a helical membrane-spanning segment. Residues 164–175 (ILSGSNKPSLYK) lie on the Cytoplasmic side of the membrane.

It belongs to the DsbB family.

It is found in the cell inner membrane. Its function is as follows. Required for disulfide bond formation in some periplasmic proteins. Acts by oxidizing the DsbA protein. This chain is Disulfide bond formation protein B, found in Shewanella sp. (strain ANA-3).